A 341-amino-acid chain; its full sequence is HTH-type transcriptional repressor PurR (341 aa).

Residues 2 to 56 form the HTH lacI-type domain; it reads ATIKDVAKRAGVSTTTVSHVINKTRFVAEETKAAVRAAIKELHYSPSAVARSLKV. Residues 4 to 23 constitute a DNA-binding region (H-T-H motif); it reads IKDVAKRAGVSTTTVSHVIN. The DNA-binding element occupies 48-56; sequence SAVARSLKV. The hypoxanthine site is built by Tyr73, Arg190, Thr192, Phe221, and Asp275.

Homodimer.

It participates in purine metabolism; purine nucleotide biosynthesis [regulation]. Is the main repressor of the genes involved in the de novo synthesis of purine nucleotides, regulating purB, purC, purEK, purF, purHD, purL, purMN and guaBA expression. PurR is allosterically activated to bind its cognate DNA by binding the purine corepressors, hypoxanthine or guanine, thereby effecting transcription repression. The protein is HTH-type transcriptional repressor PurR of Pectobacterium carotovorum subsp. carotovorum (strain PC1).